Reading from the N-terminus, the 322-residue chain is Biotin synthase (322 aa).

Positions 39 to 266 (NQIQVSSLLN…KSVVRLSAGR (228 aa)) constitute a Radical SAM core domain. The [4Fe-4S] cluster site is built by Cys54, Cys58, and Cys61. Positions 98, 129, 189, and 261 each coordinate [2Fe-2S] cluster.

The protein belongs to the radical SAM superfamily. Biotin synthase family. In terms of assembly, homodimer. It depends on [4Fe-4S] cluster as a cofactor. [2Fe-2S] cluster serves as cofactor.

It catalyses the reaction (4R,5S)-dethiobiotin + (sulfur carrier)-SH + 2 reduced [2Fe-2S]-[ferredoxin] + 2 S-adenosyl-L-methionine = (sulfur carrier)-H + biotin + 2 5'-deoxyadenosine + 2 L-methionine + 2 oxidized [2Fe-2S]-[ferredoxin]. It functions in the pathway cofactor biosynthesis; biotin biosynthesis; biotin from 7,8-diaminononanoate: step 2/2. Functionally, catalyzes the conversion of dethiobiotin (DTB) to biotin by the insertion of a sulfur atom into dethiobiotin via a radical-based mechanism. The protein is Biotin synthase of Ruthia magnifica subsp. Calyptogena magnifica.